The sequence spans 439 residues: Ribosomal protein uS12 methylthiotransferase RimO (439 aa).

In terms of domain architecture, MTTase N-terminal spans 7 to 122 (QTIAVIALGC…LPDLVFGKNF (116 aa)). Residues cysteine 16, cysteine 52, cysteine 85, cysteine 155, cysteine 159, and cysteine 162 each contribute to the [4Fe-4S] cluster site. The 229-residue stretch at 141 to 369 (SSTIPSAYLK…NAQYNIFQAK (229 aa)) folds into the Radical SAM core domain.

Belongs to the methylthiotransferase family. RimO subfamily. [4Fe-4S] cluster is required as a cofactor.

It localises to the cytoplasm. The catalysed reaction is L-aspartate(89)-[ribosomal protein uS12]-hydrogen + (sulfur carrier)-SH + AH2 + 2 S-adenosyl-L-methionine = 3-methylsulfanyl-L-aspartate(89)-[ribosomal protein uS12]-hydrogen + (sulfur carrier)-H + 5'-deoxyadenosine + L-methionine + A + S-adenosyl-L-homocysteine + 2 H(+). Catalyzes the methylthiolation of an aspartic acid residue of ribosomal protein uS12. The polypeptide is Ribosomal protein uS12 methylthiotransferase RimO (Endomicrobium trichonymphae).